The primary structure comprises 439 residues: tRNA(Ile)-lysidine synthase (439 aa).

23–28 (SGGLDS) serves as a coordination point for ATP.

It belongs to the tRNA(Ile)-lysidine synthase family.

It is found in the cytoplasm. It carries out the reaction cytidine(34) in tRNA(Ile2) + L-lysine + ATP = lysidine(34) in tRNA(Ile2) + AMP + diphosphate + H(+). In terms of biological role, ligates lysine onto the cytidine present at position 34 of the AUA codon-specific tRNA(Ile) that contains the anticodon CAU, in an ATP-dependent manner. Cytidine is converted to lysidine, thus changing the amino acid specificity of the tRNA from methionine to isoleucine. This chain is tRNA(Ile)-lysidine synthase, found in Methylococcus capsulatus (strain ATCC 33009 / NCIMB 11132 / Bath).